We begin with the raw amino-acid sequence, 641 residues long: MSKIIGIDLGTTNSCVAIMDGDKVKVIENAEGDRTTPSIIAYTDDNETLVGQSAKRQAVTNPHNTLYAIKRLIGRRFEDDVVQKDIKMVPYKIAKADNGDAWVEVKGQKMAPPQVSAEVLKKMKKTAEDYLGEKVTEAVITVPAYFNDSQRQATKDAGKIAGLEVKRIINEPTAAALAYGLDKKSGDRTVAVYDLGGGTFDLSIIEIADVDGEHQFEVLATNGDTFLGGEDFDLKVIEYLADQFKKDSGIDLRGDSLAMQRLKEAAEKAKIELSSSQQTDVNLPYITADASGPKHMNVKLTRAKLESLVEDLVQRSLEPCKVALQDAGMKAGEIDEVILVGGQTRMPLVQEKVKEFFGKEPRKDVNPDEAVAMGAAIQGAVLSGDVKDVLLLDVTPLTLGIETMGGVATPLIEKNTTIPTKKSQIFSTADDNQTAVTIHVVQGERKQAAQNKSLGRFDLADIPPAPRGVPQIEVTFDIDANGILNVSAKDKATGKEQSIVIKASSGLNDDEIEKMVRDAEANAEEDRKFEELVQARNQGDAMVHAVRKTLSEAGDKVSDSEKESIEAAIKDLEEALEGSDKEAIEAKTQKLTEVSSELAQKMYADQADQAQQAGGQEEGQAKSADDAVDAEFEEVKDDDKK.

A Phosphothreonine; by autocatalysis modification is found at T199. Residues 602-641 form a disordered region; the sequence is MYADQADQAQQAGGQEEGQAKSADDAVDAEFEEVKDDDKK. Residues 604 to 615 are compositionally biased toward low complexity; sequence ADQADQAQQAGG. A compositionally biased stretch (acidic residues) spans 626–641; it reads DAVDAEFEEVKDDDKK.

The protein belongs to the heat shock protein 70 family.

In terms of biological role, acts as a chaperone. The sequence is that of Chaperone protein DnaK from Marinobacter nauticus (strain ATCC 700491 / DSM 11845 / VT8) (Marinobacter aquaeolei).